A 188-amino-acid chain; its full sequence is Acireductone dioxygenase 1 (188 aa).

Fe(2+) is bound by residues histidine 90, histidine 92, glutamate 96, and histidine 135. Ni(2+)-binding residues include histidine 90, histidine 92, glutamate 96, and histidine 135.

Belongs to the acireductone dioxygenase (ARD) family. Requires Fe(2+) as cofactor. The cofactor is Ni(2+).

The protein resides in the cytoplasm. It localises to the nucleus. It catalyses the reaction 1,2-dihydroxy-5-(methylsulfanyl)pent-1-en-3-one + O2 = 4-methylsulfanyl-2-oxobutanoate + formate + 2 H(+). The enzyme catalyses 1,2-dihydroxy-5-(methylsulfanyl)pent-1-en-3-one + O2 = 3-(methylsulfanyl)propanoate + CO + formate + 2 H(+). It participates in amino-acid biosynthesis; L-methionine biosynthesis via salvage pathway; L-methionine from S-methyl-5-thio-alpha-D-ribose 1-phosphate: step 5/6. In terms of biological role, catalyzes 2 different reactions between oxygen and the acireductone 1,2-dihydroxy-3-keto-5-methylthiopentene (DHK-MTPene) depending upon the metal bound in the active site. Fe-containing acireductone dioxygenase (Fe-ARD) produces formate and 2-keto-4-methylthiobutyrate (KMTB), the alpha-ketoacid precursor of methionine in the methionine recycle pathway. Ni-containing acireductone dioxygenase (Ni-ARD) produces methylthiopropionate, carbon monoxide and formate, and does not lie on the methionine recycle pathway. In Vitis vinifera (Grape), this protein is Acireductone dioxygenase 1.